The primary structure comprises 41 residues: Ranatuerin-2PLg (41 aa).

Positions 1-11 (DDGVEMTEEEV) are excised as a propeptide. A disulfide bridge connects residues C36 and C41.

It belongs to the frog skin active peptide (FSAP) family. Ranatuerin subfamily.

The protein localises to the secreted. Its function is as follows. Antimicrobial peptide. In Lithobates palustris (Pickerel frog), this protein is Ranatuerin-2PLg.